Here is a 2298-residue protein sequence, read N- to C-terminus: MKGHQFKSWIFELREILKEIKNSRYFLYSWTQFNSTGSFIHIFFHQESFIKLLDSRIWSILLSGNSQGSTSNRYFTIKDVVLFVVAILLYRINNRKMVERKNLYLTGLLPIPMNSIGPRNDTLEESFESSNINRLIVPLLYLPKEKKISESSFLDPKESTQVLPITKKCIMPESNWGSRWWRDWIRKKRDSSCKISNETVAGIEISFKEKDIKYLEFPFVYYMDDPIRKDHDWELFDRLSPRKRRNIINLNSGQLFEILVKDWISYLMFAFREKKPIEVEGFFKQQGAGSTIQSNDIEHVSHLFLRNKRAISLQNCAQFHMWQFRQDLFVSWGKKQPHESDFLRNISRENWIWLDNVWLVNKDRFFSKIRNVSSNIQYDSTRSSFIQVTDSSQLKGSSDQSRDHFDSIRNEDSKYDTLINQREIQQLKERSILCWDPSFLQTERTDIESERFRFPKSLSGYSSMCRLFMQREKQMNNHLLPEEIEEFLGNPTRADRFFFSDRWSELHLGSNPTERSTRDQKLLKKEQDVSFVLSKRSEKKEIVNIFKIILYLQNTVSIHPISSDPVCDMVPKDEPDSSNKMSFLNKNGLFHLFHDRNRGVYTLHHDFESEEIFQEMADLFNLSITEPDLVYHKGFAFSIDSSGLDQKQFLNEVFNSRDESKKKSLLVLPTLFYEENESFYRRIIKKWVQTSCGNDLEDPKPKIVVFTSNNIMEAVNQYRLIRNLIPIQYITYGYGYIRNVLNRFIQKNRFDRNFEYRIQRYQIENDTLNHRTRMKYTINQHFSNLKKKSQKKWFDSLILISRTERSMNRDPNAYRYKWSNGNKNFQEHLDHFISEQNSRFQVVFDRLRINQYSIDWSEVIDKKDLSKSLCFFLYKFLLFFSKFLLFLSKSLPFFFVSFGSIPIHRSEIHIYELKSPNHPLCNQLFESIGLQIVHLKKWKPFLLDDHDTSQKSRFLINGGTISPFLFNKIPKWMIDSFDTIKNRRKFFDNTDSYFSMISHDEDNWLNPVKPFHRSSLISSFYKANRLRFLNNRYHFCFYCNKRLPFYVEKACINNYDFTYGQFLNILFIRNKRFSLCGGKKKHAFLERDTISPIESRVFNILILNDFPQSGDEGYNLYKSFHFPIRSDPFVHRAIYSIADISVTPLTEGQIVNFERTYCQPLSDMNLPDSEGKNLHQYLKFNSNMGLIHIPCSEKYLPSENRKKGIPCLKKCLEKGQMYRTFQRDSVFSTLSKWNLFQTYIPWFLTSTGYKYLNFIFLDTFSDLLPILSSSQKFVSIFHDIMHRSDISWRILQKKWCLSQWNLISEISSKCFHNLLLSEEIIHRNNESPLISTHLRSLNVREFLYSILFLLLVAGYLVRTHLLFVSRVYSELQTEFEKVKSLMIPSYMIELRKLLDRYPTSEQNSFWLKNLFLVTLEQLGNSLEEIRSSASGGNMLWGGGSAYGVKSIRSKKKYLNLIDLISIIPNPINRIAFSRNMRHLSHTSKAIYSLIRKIKNVNGDWIDDKIESWVSNSDSIDDKEREFLVQFSTLTTEKRIDQILLSLTHSDHLSKNNSGYQMIEQPGTIYLRYLVDIQKKYLMNYEFNTSCLVEKRIFLAHYQTITYSQTLCGTNSFHFSSHGKPFSLRLALSPPRGLLVIGSIGTGRSYLVKYLAANSYVPFIRVFLNKFLDNKPKGFLIDDSDDIDDIDDSHDIDDIDDSNDSDDIDRDLDTELELLTMMNALTMDMMPEIDRFYITLQFELAKAMSPCIIWIPNIHDLDVNESNSLSLGLLANHLSRDCERCSTRNILVIASTHIPQKVDPALIAPNKLNTCIKIRRLLIPQQRKHFFTLSYTRRFHFEKKMFHTNGFGSITLGSNVQDLVALTNEALSISIIQKKSIIDTNLIRSALHKQTWDLRSQVRSVQDHGILFYQIGRAVSQNVLLSNCSIDPISIYMKKKSCNEGDSYLYKWYFELGTSMKNLTILLYLLSCSAGAVAQDLWSLPGPDEKNGITSYGLVENDSDLVHGLLEVEGALVGSSRTEKDCSQFDNDRVTLLLRPEPSNPLNMIQNGSCSIVDQRFLYEKYESEFEEGEGVLDLQQIEEDLFNHIVWAPRIWCPWGFLFDCIERPNELGFPYWARSFRGKRIIYDEEDELQENDSEFLQGGTMQYQTQDRSSKEQGFFRISQFIWDPTDPLFFLFKDQPFVSVFSHREFFADEEISRGLLTFQTDLPTSIYKRWFIKNTQEKHFELLIHRQRWLRTNNSLSNGFFRSNTLSESYQYLSNMFLSNGTLLDQMTKTLLRKRWLFPDEMVVAICSNNESLV.

1637–1644 (GSIGTGRS) provides a ligand contact to ATP.

Belongs to the Ycf2 family.

The protein localises to the plastid. It is found in the chloroplast stroma. Probable ATPase of unknown function. Its presence in a non-photosynthetic plant (Epifagus virginiana) and experiments in tobacco indicate that it has an essential function which is probably not related to photosynthesis. The sequence is that of Protein Ycf2 from Lotus japonicus (Lotus corniculatus var. japonicus).